Consider the following 231-residue polypeptide: Ribosomal RNA small subunit methyltransferase G (231 aa).

S-adenosyl-L-methionine contacts are provided by residues Gly-75, Phe-80, 126 to 127, and Arg-142; that span reads AE.

Belongs to the methyltransferase superfamily. RNA methyltransferase RsmG family.

The protein localises to the cytoplasm. Its function is as follows. Specifically methylates the N7 position of a guanine in 16S rRNA. This chain is Ribosomal RNA small subunit methyltransferase G, found in Mycoplasma capricolum subsp. capricolum (strain California kid / ATCC 27343 / NCTC 10154).